The chain runs to 418 residues: Gamma-glutamyl phosphate reductase (418 aa).

The protein belongs to the gamma-glutamyl phosphate reductase family.

Its subcellular location is the cytoplasm. The catalysed reaction is L-glutamate 5-semialdehyde + phosphate + NADP(+) = L-glutamyl 5-phosphate + NADPH + H(+). It participates in amino-acid biosynthesis; L-proline biosynthesis; L-glutamate 5-semialdehyde from L-glutamate: step 2/2. Its function is as follows. Catalyzes the NADPH-dependent reduction of L-glutamate 5-phosphate into L-glutamate 5-semialdehyde and phosphate. The product spontaneously undergoes cyclization to form 1-pyrroline-5-carboxylate. This Lacticaseibacillus paracasei (strain ATCC 334 / BCRC 17002 / CCUG 31169 / CIP 107868 / KCTC 3260 / NRRL B-441) (Lactobacillus paracasei) protein is Gamma-glutamyl phosphate reductase.